We begin with the raw amino-acid sequence, 593 residues long: NADH-quinone oxidoreductase subunit C/D (593 aa).

The NADH dehydrogenase I subunit C stretch occupies residues 1–184; sequence MTADNALYIP…DPYSLTLAKQ (184 aa). The segment at 208-593 is NADH dehydrogenase I subunit D; it reads DYMFLNLGPN…IDFVMADVDR (386 aa).

The protein in the N-terminal section; belongs to the complex I 30 kDa subunit family. This sequence in the C-terminal section; belongs to the complex I 49 kDa subunit family. NDH-1 is composed of 13 different subunits. Subunits NuoB, CD, E, F, and G constitute the peripheral sector of the complex.

The protein resides in the cell inner membrane. It carries out the reaction a quinone + NADH + 5 H(+)(in) = a quinol + NAD(+) + 4 H(+)(out). In terms of biological role, NDH-1 shuttles electrons from NADH, via FMN and iron-sulfur (Fe-S) centers, to quinones in the respiratory chain. The immediate electron acceptor for the enzyme in this species is believed to be ubiquinone. Couples the redox reaction to proton translocation (for every two electrons transferred, four hydrogen ions are translocated across the cytoplasmic membrane), and thus conserves the redox energy in a proton gradient. This Pseudomonas syringae pv. tomato (strain ATCC BAA-871 / DC3000) protein is NADH-quinone oxidoreductase subunit C/D.